Reading from the N-terminus, the 194-residue chain is Peptide deformylase (194 aa).

Positions 105 and 147 each coordinate Fe cation. E148 is an active-site residue. H151 is a binding site for Fe cation.

The protein belongs to the polypeptide deformylase family. Fe(2+) serves as cofactor.

It carries out the reaction N-terminal N-formyl-L-methionyl-[peptide] + H2O = N-terminal L-methionyl-[peptide] + formate. Functionally, removes the formyl group from the N-terminal Met of newly synthesized proteins. Requires at least a dipeptide for an efficient rate of reaction. N-terminal L-methionine is a prerequisite for activity but the enzyme has broad specificity at other positions. This Flavobacterium psychrophilum (strain ATCC 49511 / DSM 21280 / CIP 103535 / JIP02/86) protein is Peptide deformylase.